Consider the following 345-residue polypeptide: MELKGKKITVHDMTLRDGMHPKRHLMTLEQMKSVAQGLDAAGVPLIEVTHGDGLGGASVNYGFPAHSDEEYLSTVIPLMKQAKVSALLLPGIGTVDHLQMAHELGVTTIRVATHCTEADVSEQHITAARKLGMDTVGFLMMAHMNSAEGLVKQAKLMEGYGANCVYVTDSAGYLLPDQVKERIAAVRAALKPETELGFHGHHNLAMGVANSIAAVEAGANRIDAAAAGLGAGAGNTPMEVLVAVCERMGIETGVDVWKIQDVAEDLVVPLMDFPIRVDRDALTLGYAGVYGSFLLFAKRAEKKYGIPARDLLVELGRRGMVGGQEDMIEDTALTMARARGIKVAA.

One can recognise a Pyruvate carboxyltransferase domain in the interval 8–260 (ITVHDMTLRD…ETGVDVWKIQ (253 aa)). A substrate-binding site is contributed by 16–17 (RD). Aspartate 17 provides a ligand contact to Mn(2+). Histidine 20 functions as the Proton acceptor in the catalytic mechanism. Substrate contacts are provided by serine 170 and histidine 199. Mn(2+)-binding residues include histidine 199 and histidine 201. Position 290 (tyrosine 290) interacts with substrate.

It belongs to the 4-hydroxy-2-oxovalerate aldolase family.

The enzyme catalyses (S)-4-hydroxy-2-oxopentanoate = acetaldehyde + pyruvate. This is 4-hydroxy-2-oxovalerate aldolase 3 (aphG) from Comamonas testosteroni (Pseudomonas testosteroni).